The chain runs to 656 residues: Chaperone protein HtpG (656 aa).

An a; substrate-binding region spans residues 1–359; the sequence is MSAQVEQLEF…AEDMSLNVSR (359 aa). The b stretch occupies residues 360-575; it reads EILQQNRQIN…AFGITPALAR (216 aa). A c region spans residues 576-656; sequence IYRASGQDVP…LLADLLSRSM (81 aa).

The protein belongs to the heat shock protein 90 family. Homodimer.

Its subcellular location is the cytoplasm. Its function is as follows. Molecular chaperone. Has ATPase activity. The polypeptide is Chaperone protein HtpG (Mycobacterium leprae (strain TN)).